Reading from the N-terminus, the 22-residue chain is ITACLDPDGWKEPGPLPGISTK.

A disordered region spans residues 1–22; the sequence is ITACLDPDGWKEPGPLPGISTK. Residue E12 is the Proton donor/acceptor of the active site.

This sequence belongs to the glyoxalase I family. Requires Zn(2+) as cofactor.

The catalysed reaction is (R)-S-lactoylglutathione = methylglyoxal + glutathione. It participates in secondary metabolite metabolism; methylglyoxal degradation; (R)-lactate from methylglyoxal: step 1/2. Functionally, catalyzes the conversion of hemimercaptal, formed from methylglyoxal and glutathione, to S-lactoylglutathione. This is Putative lactoylglutathione lyase from Pinus strobus (Eastern white pine).